The primary structure comprises 143 residues: Hemoglobin subunit alpha (143 aa).

Serine 2 is modified (N-acetylserine). Residues 2–143 (SLSDKDKSAV…VALALAEKYR (142 aa)) enclose the Globin domain. Residue histidine 60 participates in O2 binding. Position 89 (histidine 89) interacts with heme b.

The protein belongs to the globin family. In terms of assembly, heterotetramer of two alpha chains and two beta chains. Red blood cells.

Its function is as follows. Involved in oxygen transport from gills to the various peripheral tissues. The polypeptide is Hemoglobin subunit alpha (hba) (Pogonophryne scotti (Saddleback plunderfish)).